The following is a 221-amino-acid chain: 6-phosphogluconate phosphatase (221 aa).

D10 (nucleophile) is an active-site residue. Residues D10, D12, and D167 each coordinate Mg(2+). Residue D10 to D12 coordinates substrate.

The protein belongs to the HAD-like hydrolase superfamily. CbbY/CbbZ/Gph/YieH family. It depends on Mg(2+) as a cofactor. Mn(2+) is required as a cofactor. Requires Co(2+) as cofactor. The cofactor is Zn(2+).

In terms of biological role, catalyzes strongly the dephosphorylation of 6-phosphogluconate (6P-Glu) and slightly the dephosphorylation of dihydroxyacetone phosphate (DHAP) and phosphoenolpyruvate (PEP). Also hydrolyzes both purines (GMP and IMP) and pyrimidines as secondary substrates. The chain is 6-phosphogluconate phosphatase (yieH) from Escherichia coli (strain K12).